We begin with the raw amino-acid sequence, 397 residues long: Proteasome-activating nucleotidase (397 aa).

Positions Gly12 to Pro58 form a coiled coil. ATP is bound by residues Gly182–Leu187 and His321. The segment at Met395 to Gly397 is docks into pockets in the proteasome alpha-ring to cause gate opening.

This sequence belongs to the AAA ATPase family. Homohexamer. The hexameric complex has a two-ring architecture resembling a top hat that caps the 20S proteasome core at one or both ends. Upon ATP-binding, the C-terminus of PAN interacts with the alpha-rings of the proteasome core by binding to the intersubunit pockets.

Its subcellular location is the cytoplasm. Functionally, ATPase which is responsible for recognizing, binding, unfolding and translocation of substrate proteins into the archaeal 20S proteasome core particle. Is essential for opening the gate of the 20S proteasome via an interaction with its C-terminus, thereby allowing substrate entry and access to the site of proteolysis. Thus, the C-termini of the proteasomal ATPase function like a 'key in a lock' to induce gate opening and therefore regulate proteolysis. Unfolding activity requires energy from ATP hydrolysis, whereas ATP binding alone promotes ATPase-20S proteasome association which triggers gate opening, and supports translocation of unfolded substrates. In Thermococcus gammatolerans (strain DSM 15229 / JCM 11827 / EJ3), this protein is Proteasome-activating nucleotidase.